The sequence spans 381 residues: Homoserine O-succinyltransferase (381 aa).

Residues 45-360 (NAVLVCHALN…PHGHDAFLLD (316 aa)) form the AB hydrolase-1 domain. Ser151 acts as the Nucleophile in catalysis. Position 221 (Arg221) interacts with substrate. Catalysis depends on residues Asp321 and His354. Asp355 contributes to the substrate binding site.

Belongs to the AB hydrolase superfamily. MetX family. In terms of assembly, homodimer.

The protein localises to the cytoplasm. It catalyses the reaction L-homoserine + succinyl-CoA = O-succinyl-L-homoserine + CoA. It participates in amino-acid biosynthesis; L-methionine biosynthesis via de novo pathway; O-succinyl-L-homoserine from L-homoserine: step 1/1. In terms of biological role, transfers a succinyl group from succinyl-CoA to L-homoserine, forming succinyl-L-homoserine. This Burkholderia mallei (strain NCTC 10247) protein is Homoserine O-succinyltransferase.